A 566-amino-acid chain; its full sequence is Developmental regulatory protein wetA (566 aa).

5 disordered regions span residues valine 116–proline 174, serine 232–leucine 316, alanine 334–serine 364, serine 381–alanine 400, and proline 429–lysine 542. 2 stretches are compositionally biased toward polar residues: residues glutamine 165–proline 174 and alanine 269–proline 291. Residues serine 298–leucine 316 show a composition bias toward low complexity. Composition is skewed to polar residues over residues proline 347–serine 364 and serine 381–threonine 398. A compositionally biased stretch (low complexity) spans serine 435 to proline 448. The segment covering threonine 449 to threonine 462 has biased composition (polar residues). Positions serine 463–lysine 473 are enriched in basic residues. Low complexity predominate over residues proline 482–serine 500. Positions leucine 501–asparagine 511 are enriched in polar residues.

It belongs to the wetA family.

Its function is as follows. BrlA, abaA and wetA are pivotal regulators of conidiophore development and conidium maturation. They act individually and together to regulate their own expression and that of numerous other sporulation-specific genes. Plays an essential role in the completion of conidial maturation and is essential for trehalose biogenesis in conidia. Negatively regulates expression of the melanin biosynthetic gene cluster. Also plays an a role in the early phase of fungal growth including proper hyphal branching. The chain is Developmental regulatory protein wetA from Aspergillus fumigatus (strain ATCC MYA-4609 / CBS 101355 / FGSC A1100 / Af293) (Neosartorya fumigata).